A 669-amino-acid polypeptide reads, in one-letter code: MPQLLLELLSEEIPARMQAQAARDLERLARERLAAEGLLPEALKTFAGPRRLTLVAEGLPAAQADRREELKGPKVGAPEQALEGFLRKTGLTRDQLVERDGVFFATIEKPGRPTPEIVAEMVEAILRTFPWPKSMVSGTSKLRWVRPLRRILCVFDGEVVPFEVDGIASGDLSEGHRFMSDGQPFLVKDFEGYAAGLSHRSVVLDADERKERILEAAKTLCFARNLELVEDAGLLDEVAGLVEWPVPVLGDMDPAFLDLPPEVIRTSMRVHQRYFAVRDPAGGKLAPHFLTVANIAARDGGATIAKGNAKVLSARLSDARFFWDEDRKVRLEDRLEKLKGVTFHAKLGTMYERVQRIEALAGELAPFVRDEPETRTKAVQAARLAKADLVSGVVGEFPELQGIMGGYYAEAEGLDPEVVDAIRSHYRPQGPNDAVPVSSVAATVALADKLDTLVSFFGIGEKPTGSRDPFALRRAALGVIRIVLETRTRLPLKRFVSDEVLDFFADRLAVLLREQGKRHDLVAAVFALGDDDLVRIVARVEVLSAFLKTEDGANLLAGYKRAVNILRAEEKKGPLPAGEPAQAAGAPAEEAALVQAVAALDARLGPALEREDFEGAMTELAKLRGPVDAFFDKVLVNSDVPAERENRLRLLAKVRDAMGRVADFSQVTG.

The protein belongs to the class-II aminoacyl-tRNA synthetase family. Tetramer of two alpha and two beta subunits.

The protein localises to the cytoplasm. It carries out the reaction tRNA(Gly) + glycine + ATP = glycyl-tRNA(Gly) + AMP + diphosphate. The protein is Glycine--tRNA ligase beta subunit of Phenylobacterium zucineum (strain HLK1).